Consider the following 488-residue polypeptide: Serine protease HTR4 (488 aa).

An N-terminal signal peptide occupies residues M1–A35. The IGFBP N-terminal domain maps to V40 to A118. Disulfide bonds link C44-C70, C48-C72, C53-C73, C59-C76, C84-C98, and C92-C115. Positions G213–L373 are serine protease. Residues H229, D259, and S337 each act as charge relay system in the active site. In terms of domain architecture, PDZ spans K384–Q476.

Belongs to the peptidase S1C family.

The protein localises to the secreted. Serine protease. This Rattus norvegicus (Rat) protein is Serine protease HTR4 (Htra4).